The chain runs to 451 residues: uncharacterized protein (451 aa).

The region spanning 50–147 (RFEHSLGTMF…DVDADRMDYL (98 aa)) is the HD domain.

This is an uncharacterized protein from Methanocaldococcus jannaschii (strain ATCC 43067 / DSM 2661 / JAL-1 / JCM 10045 / NBRC 100440) (Methanococcus jannaschii).